Consider the following 235-residue polypeptide: Small ribosomal subunit protein eS4 (235 aa).

One can recognise an S4 RNA-binding domain in the interval 37 to 100; it reads LPLGIIIRDI…NETYRMFQDE (64 aa).

This sequence belongs to the eukaryotic ribosomal protein eS4 family.

This is Small ribosomal subunit protein eS4 from Methanosarcina barkeri (strain Fusaro / DSM 804).